A 467-amino-acid polypeptide reads, in one-letter code: Immunoglobulin superfamily member 21 (467 aa).

Positions 1–24 are cleaved as a signal peptide; it reads MRTAPSLRRCVCLLLAAILDLARG. Positions 25-132 constitute an Ig-like 1 domain; that stretch reads YLTVNIEPLP…RATREKVVLA (108 aa). The cysteines at positions 46 and 116 are disulfide-linked. 2 N-linked (GlcNAc...) asparagine glycosylation sites follow: Asn-82 and Asn-165. A disordered region spans residues 229–259; that stretch reads LSLLDAENRGGRPYTERPSRGLTPDPNILLQ. Basic and acidic residues predominate over residues 234–247; sequence AENRGGRPYTERPS. The Ig-like 2 domain maps to 344-429; that stretch reads PKIVMTPSRA…GSTDTHTRLI (86 aa). N-linked (GlcNAc...) asparagine glycosylation is found at Asn-407 and Asn-444.

As to quaternary structure, interacts (Ig-like 1 domain) with NRXN2 (via Laminin G-like 1 domain) in a trans-interaction manner.

Its subcellular location is the postsynaptic cell membrane. Its function is as follows. Involved in synaptic inhibition in the brain. Selectively regulates inhibitory presynaptic differentiation through interacting with presynaptic NRXN2. The chain is Immunoglobulin superfamily member 21 from Homo sapiens (Human).